Reading from the N-terminus, the 379-residue chain is MSATEGKVITCKAAVAWEAKKPLVIEDIEVAPPKAHEVRIKITATGVCHTDAFTLSGADPEGLFPVVLGHEGAGIVESVGEGVTNFKAGDHVIALYIPQCNECKFCKSGKTNLCQKIRLTQGAGVMPEGTSRLSCKGQQLFHFMGTSTFAEYTVVADISLTKINEKAPLEKVCLLGCGISTGYGAALNTAKVEAGSTCAVWGLGAVGLAVGLGCKKAGAGKIYGIDINPDKFELAKKFGFTDFVNPKDVADKGSIQNYLIDLTDGGFDYTFECIGNVNTMRSALEATHKGWGTSVVIGVAGAGQEISTRPFQLVVGRVWKGSAFGGWRSVSDVPKLVEDYLKKDLLVDEFITHELPLSQINEAFDLMHKGESIRSIIKY.

S2 carries the post-translational modification N-acetylserine. 7 residues coordinate Zn(2+): C48, H70, C100, C103, C106, C114, and C177.

The protein belongs to the zinc-containing alcohol dehydrogenase family. Class-III subfamily. Zn(2+) serves as cofactor.

It carries out the reaction a primary alcohol + NAD(+) = an aldehyde + NADH + H(+). It catalyses the reaction a secondary alcohol + NAD(+) = a ketone + NADH + H(+). The catalysed reaction is S-(hydroxymethyl)glutathione + NADP(+) = S-formylglutathione + NADPH + H(+). The enzyme catalyses S-(hydroxymethyl)glutathione + NAD(+) = S-formylglutathione + NADH + H(+). It carries out the reaction octan-1-ol + NAD(+) = octanal + NADH + H(+). Its function is as follows. Class-III ADH is remarkably ineffective in oxidizing ethanol, but it readily catalyzes the oxidation of long-chain primary alcohols and the oxidation of S-(hydroxymethyl) glutathione. This Drosophila melanogaster (Fruit fly) protein is Alcohol dehydrogenase class-3 (Fdh).